Reading from the N-terminus, the 207-residue chain is Ribosomal RNA small subunit methyltransferase G (207 aa).

S-adenosyl-L-methionine-binding positions include Gly73, Leu78, Val124–Glu125, and Arg139.

This sequence belongs to the methyltransferase superfamily. RNA methyltransferase RsmG family.

It localises to the cytoplasm. The catalysed reaction is guanosine(527) in 16S rRNA + S-adenosyl-L-methionine = N(7)-methylguanosine(527) in 16S rRNA + S-adenosyl-L-homocysteine. Functionally, specifically methylates the N7 position of guanine in position 527 of 16S rRNA. The protein is Ribosomal RNA small subunit methyltransferase G of Salmonella agona (strain SL483).